The chain runs to 212 residues: Methylthioribulose-1-phosphate dehydratase (212 aa).

2 residues coordinate Zn(2+): histidine 97 and histidine 99.

This sequence belongs to the aldolase class II family. MtnB subfamily. Homotetramer. Zn(2+) is required as a cofactor.

The enzyme catalyses 5-(methylsulfanyl)-D-ribulose 1-phosphate = 5-methylsulfanyl-2,3-dioxopentyl phosphate + H2O. It participates in amino-acid biosynthesis; L-methionine biosynthesis via salvage pathway; L-methionine from S-methyl-5-thio-alpha-D-ribose 1-phosphate: step 2/6. In terms of biological role, catalyzes the dehydration of methylthioribulose-1-phosphate (MTRu-1-P) into 2,3-diketo-5-methylthiopentyl-1-phosphate (DK-MTP-1-P). This Bacillus thuringiensis subsp. konkukian (strain 97-27) protein is Methylthioribulose-1-phosphate dehydratase.